The primary structure comprises 1212 residues: DNA-directed RNA polymerase subunit beta (1212 aa).

Basic and acidic residues predominate over residues 1176–1195 (QQEKKKLAEEAAKKDDKSAE). The interval 1176-1212 (QQEKKKLAEEAAKKDDKSAEPVDQSDSSTSSDDKVSK) is disordered.

Belongs to the RNA polymerase beta chain family. In terms of assembly, the RNAP catalytic core consists of 2 alpha, 1 beta, 1 beta' and 1 omega subunit. When a sigma factor is associated with the core the holoenzyme is formed, which can initiate transcription.

The catalysed reaction is RNA(n) + a ribonucleoside 5'-triphosphate = RNA(n+1) + diphosphate. DNA-dependent RNA polymerase catalyzes the transcription of DNA into RNA using the four ribonucleoside triphosphates as substrates. This is DNA-directed RNA polymerase subunit beta from Lactobacillus gasseri (strain ATCC 33323 / DSM 20243 / BCRC 14619 / CIP 102991 / JCM 1131 / KCTC 3163 / NCIMB 11718 / NCTC 13722 / AM63).